Consider the following 569-residue polypeptide: MNKKFKKIVTEKKLTDAERIKENSNYLRGTITDDLKNEITNGFTGDNFSLIRFHGMYQQDDRDLRIERNEQKLEPRYAMMLRCRLPGGVIKAKKWLKIDYFASKYTLYGTIRLTNRQTFQFHGILKKNLKDVHKMLHSIGLDSLATANDVNRNVLCTSNPMESLIHQEAYEWARKISNFLLPHTKAYAEIWLDQKKIVTTEKEPILGKTYLPRKFKTTVVIPPYNDVDLYANDMNFVAITKNEKIIGFNILIGGGLSFIHGNKNTWPFLATEIGYISVENTLSIAKAIVTTQRDWGNRTDRANAKTRYTINNFGLNEFKKEIEKRANVNLKPVREYSFISRGDRFGWIKDINNNWSLTLFIQNGRIYDDNDKLFKSGLLKIANIHDGNFRITSNQNIIISEVSEKNKNKIEKIALSSGLINKSTNLRKNSMACVSFPTCPLAMAEAERMLSFFITQLENIMLKYGVEDEVIILRVSGCPNGCGRSLLAEIGLIGKSIGRYNLYIGGNRIGNRIPKIYKENITEQEILIHLKYLIKTWSNERKNKEDFGDFIVRKEFVKEVINPVYDFWS.

Residues Cys-433, Cys-439, Cys-478, and Cys-482 each coordinate [4Fe-4S] cluster. Residue Cys-482 participates in siroheme binding.

The protein belongs to the nitrite and sulfite reductase 4Fe-4S domain family. As to quaternary structure, alpha(8)-beta(8). The alpha component is a flavoprotein, the beta component is a hemoprotein. Siroheme serves as cofactor. It depends on [4Fe-4S] cluster as a cofactor.

It carries out the reaction hydrogen sulfide + 3 NADP(+) + 3 H2O = sulfite + 3 NADPH + 4 H(+). It functions in the pathway sulfur metabolism; hydrogen sulfide biosynthesis; hydrogen sulfide from sulfite (NADPH route): step 1/1. Functionally, component of the sulfite reductase complex that catalyzes the 6-electron reduction of sulfite to sulfide. This is one of several activities required for the biosynthesis of L-cysteine from sulfate. The polypeptide is Sulfite reductase [NADPH] hemoprotein beta-component (Buchnera aphidicola subsp. Acyrthosiphon pisum (strain 5A)).